The chain runs to 257 residues: MLLGVNIDHIAVLREARQVNDPDILMGMYAAIIGGADQITTHLREDRRHINENDVKDIINHSRVPVNLECSINEEIIDFVCKFRPHRATLVPEKREELTTEGGLNLSTAGLENIINRLKNEGIKVSLFIDTSRENIDIASELAVDCIELHTGTYANIFNMLNSNIALTKYSIKNYEKSREDLQNLLKDELANIKHLAAYAKGLGLKVAAGHGLNYQNVASLTKNSEIFELNIGQSIIARAIFVGMKTAVCEMKELIK.

Asn6 lines the 3-amino-2-oxopropyl phosphate pocket. 8 to 9 is a binding site for 1-deoxy-D-xylulose 5-phosphate; that stretch reads DH. Arg17 serves as a coordination point for 3-amino-2-oxopropyl phosphate. His42 (proton acceptor) is an active-site residue. Residues Arg44 and His49 each contribute to the 1-deoxy-D-xylulose 5-phosphate site. Glu69 acts as the Proton acceptor in catalysis. Thr99 provides a ligand contact to 1-deoxy-D-xylulose 5-phosphate. His211 (proton donor) is an active-site residue. 3-amino-2-oxopropyl phosphate contacts are provided by residues Gly212 and 233 to 234; that span reads GQ.

Belongs to the PNP synthase family. As to quaternary structure, homooctamer; tetramer of dimers.

The protein localises to the cytoplasm. It catalyses the reaction 3-amino-2-oxopropyl phosphate + 1-deoxy-D-xylulose 5-phosphate = pyridoxine 5'-phosphate + phosphate + 2 H2O + H(+). The protein operates within cofactor biosynthesis; pyridoxine 5'-phosphate biosynthesis; pyridoxine 5'-phosphate from D-erythrose 4-phosphate: step 5/5. Catalyzes the complicated ring closure reaction between the two acyclic compounds 1-deoxy-D-xylulose-5-phosphate (DXP) and 3-amino-2-oxopropyl phosphate (1-amino-acetone-3-phosphate or AAP) to form pyridoxine 5'-phosphate (PNP) and inorganic phosphate. The polypeptide is Pyridoxine 5'-phosphate synthase (Campylobacter hominis (strain ATCC BAA-381 / DSM 21671 / CCUG 45161 / LMG 19568 / NCTC 13146 / CH001A)).